A 97-amino-acid polypeptide reads, in one-letter code: Pyrin domain-containing protein 2 (97 aa).

Positions 1 to 94 (MASSAELDFN…SGRADEHCVM (94 aa)) constitute a Pyrin domain.

As to quaternary structure, interacts with PYCARD/ASC (via pyrin domain). Interacts with NLRP2 (via pyrin domain). Predominantly expressed in peripheral blood. Weakly expressed in testis.

The protein resides in the cytoplasm. It localises to the nucleus. Functionally, may play a role in innate immunity by disrupting the interaction between PYCARD and NLRP3, thereby regulating the NLRP3 inflammasome. May also inhibit NF-kappa-B signaling distally by affecting the nuclear accumulation of RELA. The chain is Pyrin domain-containing protein 2 from Homo sapiens (Human).